Reading from the N-terminus, the 509-residue chain is Solute carrier family 2, facilitated glucose transporter member 4 (509 aa).

At Met-1–Leu-24 the chain is on the cytoplasmic side. The interval Gln-7–Gly-13 is interaction with SRFBP1. Residue Ser-10 is modified to Phosphoserine. The helical transmembrane segment at Val-25–Ile-45 threads the bilayer. Over Asn-46 to Trp-81 the chain is Extracellular. An N-linked (GlcNAc...) asparagine glycan is attached at Asn-57. The chain crosses the membrane as a helical span at residues Ala-82–Ile-102. Residues Ser-103–Ala-111 are Cytoplasmic-facing. The helical transmembrane segment at Met-112 to Ala-132 threads the bilayer. Residues Ala-133–Arg-142 lie on the Extracellular side of the membrane. Residues Phe-143–Ile-163 form a helical membrane-spanning segment. At Ala-164–Ala-171 the chain is on the cytoplasmic side. The helical transmembrane segment at Leu-172 to Leu-192 threads the bilayer. Gln-177 provides a ligand contact to D-glucose. Residues Glu-193–Leu-201 are Extracellular-facing. Residues Trp-202–Phe-222 form a helical membrane-spanning segment. The S-palmitoyl cysteine moiety is linked to residue Cys-223. Topologically, residues Cys-223–Pro-287 are cytoplasmic. Ser-274 bears the Phosphoserine; by SGK1 mark. The helical transmembrane segment at Leu-288–Tyr-308 threads the bilayer. D-glucose contacts are provided by residues Gln-298–Gln-299 and Asn-304. Residues Tyr-309 to Ala-323 are Extracellular-facing. The chain crosses the membrane as a helical span at residues Tyr-324 to Val-344. Residue Asn-333 coordinates D-glucose. Residues Glu-345–His-353 are Cytoplasmic-facing. Residues Leu-354 to Leu-374 traverse the membrane as a helical segment. The Extracellular segment spans residues Glu-375–Ser-384. The helical transmembrane segment at Ile-385 to Phe-405 threads the bilayer. Glu-396 and Trp-404 together coordinate D-glucose. At Ile-406–Pro-417 the chain is on the cytoplasmic side. Residues Ala-418–Phe-438 form a helical membrane-spanning segment. At Gln-439–Met-445 the chain is on the extracellular side. Residues Gly-446 to Leu-466 traverse the membrane as a helical segment. The Cytoplasmic portion of the chain corresponds to Arg-467 to Asp-509. Thr-486 carries the phosphothreonine modification. Residue Ser-488 is modified to Phosphoserine. A Dileucine internalization motif motif is present at residues Leu-489–Leu-490.

It belongs to the major facilitator superfamily. Sugar transporter (TC 2.A.1.1) family. Glucose transporter subfamily. In terms of assembly, interacts with NDUFA9. Binds to DAXX. Interacts via its N-terminus with SRFBP1. Interacts with TRARG1; the interaction is required for proper SLC2A4 recycling after insulin stimulation. In terms of processing, sumoylated. Post-translationally, palmitoylated. Palmitoylation by ZDHHC7 controls the insulin-dependent translocation of GLUT4 to the plasma membrane. Skeletal and cardiac muscles; brown and white fat.

Its subcellular location is the cell membrane. It is found in the endomembrane system. The protein resides in the cytoplasm. The protein localises to the perinuclear region. The enzyme catalyses D-glucose(out) = D-glucose(in). Its function is as follows. Insulin-regulated facilitative glucose transporter, which plays a key role in removal of glucose from circulation. Response to insulin is regulated by its intracellular localization: in the absence of insulin, it is efficiently retained intracellularly within storage compartments in muscle and fat cells. Upon insulin stimulation, translocates from these compartments to the cell surface where it transports glucose from the extracellular milieu into the cell. The polypeptide is Solute carrier family 2, facilitated glucose transporter member 4 (Homo sapiens (Human)).